Here is a 333-residue protein sequence, read N- to C-terminus: Flap endonuclease 1 (333 aa).

Residues 1–99 (MGVALRDILA…ETNAERKKLR (99 aa)) are N-domain. Asp-28, Asp-81, Glu-153, Glu-155, Asp-174, Asp-176, and Asp-235 together coordinate Mg(2+). The tract at residues 117–256 (EAYRQARSAT…TALKIVKSGG (140 aa)) is I-domain. The segment at 325-333 (GQKTLESFF) is interaction with PCNA.

The protein belongs to the XPG/RAD2 endonuclease family. FEN1 subfamily. Interacts with PCNA. PCNA stimulates the nuclease activity without altering cleavage specificity. Mg(2+) serves as cofactor.

Its function is as follows. Structure-specific nuclease with 5'-flap endonuclease and 5'-3' exonuclease activities involved in DNA replication and repair. During DNA replication, cleaves the 5'-overhanging flap structure that is generated by displacement synthesis when DNA polymerase encounters the 5'-end of a downstream Okazaki fragment. Binds the unpaired 3'-DNA end and kinks the DNA to facilitate 5' cleavage specificity. Cleaves one nucleotide into the double-stranded DNA from the junction in flap DNA, leaving a nick for ligation. Also involved in the base excision repair (BER) pathway. Acts as a genome stabilization factor that prevents flaps from equilibrating into structures that lead to duplications and deletions. Also possesses 5'-3' exonuclease activity on nicked or gapped double-stranded DNA. This chain is Flap endonuclease 1, found in Methanoregula boonei (strain DSM 21154 / JCM 14090 / 6A8).